The chain runs to 501 residues: Cytochrome P450 2J4 (501 aa).

The next 2 membrane-spanning stretches (helical) occupy residues I12–A32 and N77–I97. Heme is bound at residue C447.

The protein belongs to the cytochrome P450 family. Requires heme as cofactor. As to expression, expressed in small intestinal enterocytes (at protein level). In the intestinal crypt, expressed at higher levels in the mature villous cells than in undifferentiated crypt cells (at protein level). Expressed in liver, kidney, lung, and olfactory mucosa (at protein level).

The protein resides in the endoplasmic reticulum membrane. It is found in the microsome membrane. It catalyses the reaction an organic molecule + reduced [NADPH--hemoprotein reductase] + O2 = an alcohol + oxidized [NADPH--hemoprotein reductase] + H2O + H(+). The catalysed reaction is (5Z,8Z,11Z,14Z)-eicosatetraenoate + reduced [NADPH--hemoprotein reductase] + O2 = 19-hydroxy-(5Z,8Z,11Z,14Z)-eicosatetraenoate + oxidized [NADPH--hemoprotein reductase] + H2O + H(+). It carries out the reaction all-trans-retinal + reduced [NADPH--hemoprotein reductase] + O2 = all-trans-retinoate + oxidized [NADPH--hemoprotein reductase] + H2O + 2 H(+). The enzyme catalyses 9-cis-retinal + reduced [NADPH--hemoprotein reductase] + O2 = 9-cis-retinoate + oxidized [NADPH--hemoprotein reductase] + H2O + 2 H(+). Its pathway is lipid metabolism; arachidonate metabolism. It participates in cofactor metabolism; retinol metabolism. Its function is as follows. A cytochrome P450 monooxygenase that may play a major role in intestinal retinoid metabolism. Catalyzes the oxidative transformation of all-trans retinal and 9-cis-retinal to the corresponding active forms all-trans and 9-cis retinoic acids. Catalyzes the hydroxylation of carbon-hydrogen bonds. Hydroxylates arachidonic acid predominantly at the omega-1 position. Mechanistically, uses molecular oxygen inserting one oxygen atom into a substrate, and reducing the second into a water molecule, with two electrons provided by NADPH via cytochrome P450 reductase (CPR; NADPH--hemoprotein reductase). In Rattus norvegicus (Rat), this protein is Cytochrome P450 2J4.